A 212-amino-acid chain; its full sequence is EFC-associated protein OPG053 (212 aa).

Topologically, residues 1 to 175 are virion surface; that stretch reads MAETKEFKTL…IIENRLPYYD (175 aa). 3 disulfides stabilise this stretch: C33–C55, C47–C127, and C107–C149. The helical transmembrane segment at 176-196 threads the bilayer; sequence PWFLVGVAIILVIFTVAICSI. Over 197–212 the chain is Intravirion; sequence RRNLALKYRYGTFLYV.

This sequence belongs to the orthopoxvirus OPG053 family. In terms of assembly, component of the entry fusion complex (EFC) composed of OPG053, OPG076, OPG086, OPG094, OPG095, OPG099, OPG107, OPG143, OPG104, OPG147 and OPG155. Except for OPG095 and OPG052, each of the EFC proteins is required for assembly or stability of the complex. Disulfid bonds are oxidized in the cytoplasm by OPG088 protein. Post-translationally, unglycosylated because produced in viral factories instead of the classic ER -Golgi route.

The protein resides in the virion membrane. Component of the entry fusion complex (EFC), which consists of 11 proteins. During cell infection, this complex mediates entry of the virion core into the host cytoplasm by a two-step mechanism consisting of lipid mixing of the viral and cellular membranes and subsequent pore formation. The sequence is that of EFC-associated protein OPG053 (OPG053) from Homo sapiens (Human).